A 1138-amino-acid chain; its full sequence is Condensin-2 complex subunit G2 (1138 aa).

Ser30 carries the phosphoserine modification. One copy of the HEAT repeat lies at 459 to 497 (LLPTLRYSLHDNSEKVRVAFVDLLLKIKAVRAAKFWKIC). A Phosphothreonine modification is found at Thr1114.

As to quaternary structure, component of the condensin-2 complex, which contains the SMC2 and SMC4 heterodimer, and 3 non SMC subunits that probably regulate the complex: NCAPH2, NCAPD3 and NCAPG2. In terms of tissue distribution, expressed in spleen, lung and testis as well as in hematopoietic cell lines.

The protein resides in the nucleus. Regulatory subunit of the condensin-2 complex, a complex which establishes mitotic chromosome architecture and is involved in physical rigidity of the chromatid axis. Is required for early embryonic development and is essential for viability and expansion of the inner cell mass (ICM) of the implanting blastocyst. The sequence is that of Condensin-2 complex subunit G2 (Ncapg2) from Mus musculus (Mouse).